We begin with the raw amino-acid sequence, 230 residues long: Sugar fermentation stimulation protein homolog (230 aa).

It belongs to the SfsA family.

This Clostridium botulinum (strain Okra / Type B1) protein is Sugar fermentation stimulation protein homolog.